The following is a 571-amino-acid chain: Proline--tRNA ligase (571 aa).

Belongs to the class-II aminoacyl-tRNA synthetase family. ProS type 1 subfamily. In terms of assembly, homodimer.

Its subcellular location is the cytoplasm. The catalysed reaction is tRNA(Pro) + L-proline + ATP = L-prolyl-tRNA(Pro) + AMP + diphosphate. Functionally, catalyzes the attachment of proline to tRNA(Pro) in a two-step reaction: proline is first activated by ATP to form Pro-AMP and then transferred to the acceptor end of tRNA(Pro). As ProRS can inadvertently accommodate and process non-cognate amino acids such as alanine and cysteine, to avoid such errors it has two additional distinct editing activities against alanine. One activity is designated as 'pretransfer' editing and involves the tRNA(Pro)-independent hydrolysis of activated Ala-AMP. The other activity is designated 'posttransfer' editing and involves deacylation of mischarged Ala-tRNA(Pro). The misacylated Cys-tRNA(Pro) is not edited by ProRS. The chain is Proline--tRNA ligase from Actinobacillus pleuropneumoniae serotype 5b (strain L20).